The chain runs to 205 residues: ATP synthase subunit b (205 aa).

The helical transmembrane segment at 45–65 (LGMTATAWVSLAMVIVILLLL) threads the bilayer.

This sequence belongs to the ATPase B chain family. F-type ATPases have 2 components, F(1) - the catalytic core - and F(0) - the membrane proton channel. F(1) has five subunits: alpha(3), beta(3), gamma(1), delta(1), epsilon(1). F(0) has three main subunits: a(1), b(2) and c(10-14). The alpha and beta chains form an alternating ring which encloses part of the gamma chain. F(1) is attached to F(0) by a central stalk formed by the gamma and epsilon chains, while a peripheral stalk is formed by the delta and b chains.

The protein localises to the cell inner membrane. F(1)F(0) ATP synthase produces ATP from ADP in the presence of a proton or sodium gradient. F-type ATPases consist of two structural domains, F(1) containing the extramembraneous catalytic core and F(0) containing the membrane proton channel, linked together by a central stalk and a peripheral stalk. During catalysis, ATP synthesis in the catalytic domain of F(1) is coupled via a rotary mechanism of the central stalk subunits to proton translocation. In terms of biological role, component of the F(0) channel, it forms part of the peripheral stalk, linking F(1) to F(0). The chain is ATP synthase subunit b from Rhizorhabdus wittichii (strain DSM 6014 / CCUG 31198 / JCM 15750 / NBRC 105917 / EY 4224 / RW1) (Sphingomonas wittichii).